Consider the following 493-residue polypeptide: Desmethylyatein synthase (493 aa).

The chain crosses the membrane as a helical span at residues 1–21 (METFQCLTLFLLFISTVFILK). Heme is bound at residue C434.

This sequence belongs to the cytochrome P450 family. Heme is required as a cofactor.

Its subcellular location is the membrane. The enzyme catalyses (-)-bursehernin + reduced [NADPH--hemoprotein reductase] + O2 = (-)-5'-demethylyatein + oxidized [NADPH--hemoprotein reductase] + H2O + H(+). Its pathway is aromatic compound metabolism; phenylpropanoid biosynthesis. In terms of biological role, cytochrome P450 involved in the biosynthesis of etoposide, a chemotherapeutic compound of the topoisomerase inhibitor family. Catalyzes the conversion of bursehernin to demethylyatein. The protein is Desmethylyatein synthase of Sinopodophyllum hexandrum (Himalayan may apple).